The sequence spans 583 residues: MPKPINVRVTTMDAELEFAIQPNTTGKQLFDQVVKTVGLREVWFFGLQYVDSKGYSTWLKLNKKVTQQDVRKENPLQFKFRAKFFPEDVSEELIQEITQRLFFLQVKEAILNDEIYCPPETAVLLASYAVQSKYGDYNKEIHKLGYLANDRLLPQRVLEQHKLTKEQWEERIQNWHEEHRGMLREDSMMEYLKIAQDLEMYGVNYFEIKNKKGTELWLGVDALGLNIYEHDDKLTPKIGFPWSEIRNISFNDKKFVIKPIDKKAPDFVFYAPRLRINKRILALCMGNHELYMRRRKPDTIEVQQMKAQAREEKHQKQLERAQLENEKKKREIAEKEKERIEREKEELMERLRQIEEQTMKAQKELEEQTRRALELDQERKRAKEEAERLEKERRAAEEAKAALAKQAADQMKNQEQLAAELAEFTAKIALLEEAKKKKEEEASEWQHKAFAAQEDLEKTKEELKSVMSAPPPPPPPPVIPPTENEHDEHDENNAEASAELSSDGVMNHRSEEERVTETQKNERVKKQLQALSSELAQARDETKKTQNDVLHAENVKAGRGKYKTLRQIRQGNTKQRIDEFEAM.

Residues 5-295 (INVRVTTMDA…GNHELYMRRR (291 aa)) enclose the FERM domain. A 1,2-diacyl-sn-glycero-3-phospho-(1D-myo-inositol) is bound by residues 60-63 (KLNK) and Lys-278. Disordered regions lie at residues 310 to 336 (REEK…AEKE) and 436 to 527 (KKKE…VKKQ). Basic and acidic residues-rich tracts occupy residues 436-447 (KKKEEEASEWQH) and 455-464 (DLEKTKEELK). A compositionally biased stretch (pro residues) spans 469-480 (APPPPPPPPVIP). Composition is skewed to basic and acidic residues over residues 483 to 492 (ENEHDEHDEN) and 506 to 525 (MNHR…ERVK).

It is found in the cell membrane. It localises to the cytoplasm. The protein resides in the cytoskeleton. Functionally, probably plays a crucial role in the binding of the barbed end of actin filaments to the plasma membrane. The polypeptide is Radixin (RDX) (Gallus gallus (Chicken)).